We begin with the raw amino-acid sequence, 351 residues long: Protein FAM118B (351 aa).

An N-acetylalanine modification is found at alanine 2. Serine 9 carries the phosphoserine modification.

This sequence belongs to the FAM118 family.

The protein resides in the nucleus. It localises to the cajal body. Its function is as follows. May play a role in Cajal bodies formation. This Bos taurus (Bovine) protein is Protein FAM118B (FAM118B).